The chain runs to 157 residues: Cytochrome P450 monooxygenase atG (157 aa).

Cys97 is a heme binding site.

It belongs to the cytochrome P450 family. The cofactor is heme.

It functions in the pathway secondary metabolite biosynthesis. Its function is as follows. Cytochrome P450 monooxygenase; part of the gene cluster that mediates the biosynthesis of terreic acid, a quinone epoxide inhibitor of Bruton's tyrosine kinase (BTK). The first step of the pathway is the synthesis of 6-methylsalicylic acid (6-MSA) by the 6-methylsalicylic acid synthase atX. In the biosynthesis of 6-MSA, atX utilizes one acetyl-CoA and three malonyl-CoAs as its substrates and catalyzes a series of programmed reactions including Claisen condensation, reduction, aldol cyclization, and the hydrolytic cleavage that yields 6-MSA. The 6-methylsalicylate 1-monooxygenase atA then catalyzes the decarboxylative hydroxylation of 6-MSA to 3-methylcatechol. The next step is the conversion of 3-methylcatechol to 3-methyl-1,2,4-benzenetriol by cytochrome P450 monooxygenase atE, which is enhanced by cytochrome P450 monooxygenase atG. Then, the epoxidase atD catalyzes the epoxidation and hydroxyl oxidation of 3-methyl-1,2,4-benzenetriol to terremutin. Lastly, GMC oxidoreductase atC oxidizes terremutin to terreic acid. The sequence is that of Cytochrome P450 monooxygenase atG from Aspergillus terreus (strain NIH 2624 / FGSC A1156).